The chain runs to 394 residues: Acetate kinase 1 (394 aa).

N8 contributes to the Mg(2+) binding site. K15 contributes to the ATP binding site. R90 contributes to the substrate binding site. The Proton donor/acceptor role is filled by D147. ATP-binding positions include 207-211 and 282-284; these read HLGSG and DMR. Position 382 (E382) interacts with Mg(2+).

The protein belongs to the acetokinase family. As to quaternary structure, homodimer. It depends on Mg(2+) as a cofactor. The cofactor is Mn(2+).

Its subcellular location is the cytoplasm. It catalyses the reaction acetate + ATP = acetyl phosphate + ADP. It functions in the pathway metabolic intermediate biosynthesis; acetyl-CoA biosynthesis; acetyl-CoA from acetate: step 1/2. Functionally, catalyzes the formation of acetyl phosphate from acetate and ATP. Can also catalyze the reverse reaction. This is Acetate kinase 1 from Latilactobacillus sakei subsp. sakei (strain 23K) (Lactobacillus sakei subsp. sakei).